Consider the following 180-residue polypeptide: ATP synthase subunit delta (180 aa).

The protein belongs to the ATPase delta chain family. As to quaternary structure, F-type ATPases have 2 components, F(1) - the catalytic core - and F(0) - the membrane proton channel. F(1) has five subunits: alpha(3), beta(3), gamma(1), delta(1), epsilon(1). CF(0) has four main subunits: a(1), b(1), b'(1) and c(10-14). The alpha and beta chains form an alternating ring which encloses part of the gamma chain. F(1) is attached to F(0) by a central stalk formed by the gamma and epsilon chains, while a peripheral stalk is formed by the delta, b and b' chains.

It localises to the cellular thylakoid membrane. Its function is as follows. F(1)F(0) ATP synthase produces ATP from ADP in the presence of a proton or sodium gradient. F-type ATPases consist of two structural domains, F(1) containing the extramembraneous catalytic core and F(0) containing the membrane proton channel, linked together by a central stalk and a peripheral stalk. During catalysis, ATP synthesis in the catalytic domain of F(1) is coupled via a rotary mechanism of the central stalk subunits to proton translocation. Functionally, this protein is part of the stalk that links CF(0) to CF(1). It either transmits conformational changes from CF(0) to CF(1) or is implicated in proton conduction. The protein is ATP synthase subunit delta of Prochlorococcus marinus (strain MIT 9215).